Here is a 206-residue protein sequence, read N- to C-terminus: MDWQLDAAELRVLGALMEKEATTPDYYPMSLNALVNACNQKSNREPVVNFDEETVETALHELRAKGLSSRISGESRVPKHEQRFVEKFNLGRREAAVMCVLMLRGPQTVGELRGRTERIFTFDDLEGVESTLQRLAEIGFVKKLPRQTGYKEQRWAQLLAGDIEVAEEAAPAMMERGASDRDRIAALEEEVAELKRAFEQFRRNFE.

Belongs to the UPF0502 family.

This chain is UPF0502 protein Acid_1185, found in Solibacter usitatus (strain Ellin6076).